The chain runs to 136 residues: Sec-independent protein translocase protein TatB (136 aa).

A helical transmembrane segment spans residues 1 to 21 (MFDIGFWELVLISVIGLVVLG). Residues 66–136 (ASKQGLSDLD…TTPPRQDKNE (71 aa)) are disordered. 2 stretches are compositionally biased toward basic and acidic residues: residues 77–89 (ELQK…KETA) and 96–107 (YKKDIDDIKTSL). Residues 108-130 (DKNPSGTTQQENSILDSSKTTPP) are compositionally biased toward polar residues.

This sequence belongs to the TatB family. The Tat system comprises two distinct complexes: a TatABC complex, containing multiple copies of TatA, TatB and TatC subunits, and a separate TatA complex, containing only TatA subunits. Substrates initially bind to the TatABC complex, which probably triggers association of the separate TatA complex to form the active translocon.

The protein resides in the cell inner membrane. Its function is as follows. Part of the twin-arginine translocation (Tat) system that transports large folded proteins containing a characteristic twin-arginine motif in their signal peptide across membranes. Together with TatC, TatB is part of a receptor directly interacting with Tat signal peptides. TatB may form an oligomeric binding site that transiently accommodates folded Tat precursor proteins before their translocation. In Psychromonas ingrahamii (strain DSM 17664 / CCUG 51855 / 37), this protein is Sec-independent protein translocase protein TatB.